A 262-amino-acid polypeptide reads, in one-letter code: Taurine import ATP-binding protein TauB (262 aa).

Residues 4–233 (LELERISAQY…RYAAGESARA (230 aa)) enclose the ABC transporter domain. 38–45 (GPSGSGKT) is an ATP binding site.

It belongs to the ABC transporter superfamily. Taurine importer (TC 3.A.1.17.1) family. The complex is composed of two ATP-binding proteins (TauB), two transmembrane proteins (TauC) and a solute-binding protein (TauA).

Its subcellular location is the cell inner membrane. The catalysed reaction is taurine(out) + ATP + H2O = taurine(in) + ADP + phosphate + H(+). In terms of biological role, part of the ABC transporter complex TauABC involved in taurine import. Responsible for energy coupling to the transport system. This Pseudomonas putida (Arthrobacter siderocapsulatus) protein is Taurine import ATP-binding protein TauB.